The following is a 278-amino-acid chain: 1-acyl-sn-glycerol-3-phosphate acyltransferase beta (278 aa).

The first 23 residues, 1-23 (MDPWPWLTAALLLLLLLVQLSRT), serve as a signal peptide directing secretion. Over 24–29 (ARFYAK) the chain is Lumenal. The chain crosses the membrane as a helical span at residues 30 to 50 (VGLYCVLCLSFSAAASIVCLL). The Cytoplasmic segment spans residues 51–121 (RHGGRTVDNM…PKRCVQIAKR (71 aa)). The HXXXXD motif signature appears at 98–103 (HQSILD). A helical transmembrane segment spans residues 122 to 142 (ELMFTGPVGLIMYLGGVYFIN). Residues 143–278 (RQQARTAMSV…IKEPGVLPAQ (136 aa)) are Lumenal-facing. An EGTR motif motif is present at residues 172–175 (EGTR).

This sequence belongs to the 1-acyl-sn-glycerol-3-phosphate acyltransferase family. In terms of tissue distribution, expressed at high levels in the liver, at intermediate levels in the kidney, gut, heart and skeletal muscles. Undetectable in brain and spleen.

It is found in the endoplasmic reticulum membrane. The catalysed reaction is a 1-acyl-sn-glycero-3-phosphate + an acyl-CoA = a 1,2-diacyl-sn-glycero-3-phosphate + CoA. It carries out the reaction 1-(9Z-octadecenoyl)-sn-glycero-3-phosphate + (9Z)-octadecenoyl-CoA = 1,2-di-(9Z-octadecenoyl)-sn-glycero-3-phosphate + CoA. The enzyme catalyses 1-(9Z-octadecenoyl)-sn-glycero-3-phosphate + hexadecanoyl-CoA = 1-(9Z)-octadecenoyl-2-hexadecanoyl-sn-glycero-3-phosphate + CoA. It catalyses the reaction heptadecanoyl-CoA + 1-(9Z-octadecenoyl)-sn-glycero-3-phosphate = 1-(9Z)-octadecenoyl-2-heptadecanoyl-sn-glycero-3-phosphate + CoA. The catalysed reaction is 1-(9Z-octadecenoyl)-sn-glycero-3-phosphate + (9Z,12Z)-octadecadienoyl-CoA = 1-(9Z)-octadecenoyl-2-(9Z,12Z)-octadecadienoyl-sn-glycero-3-phosphate + CoA. It carries out the reaction 1-(9Z-octadecenoyl)-sn-glycero-3-phosphate + tetradecanoyl-CoA = 1-(9Z)-octadecenoyl-2-tetradecanoyl-sn-glycero-3-phosphate + CoA. The enzyme catalyses pentadecanoyl-CoA + 1-(9Z-octadecenoyl)-sn-glycero-3-phosphate = 1-(9Z)-octadecenoyl-2-pentadecanoyl-sn-glycero-3-phosphate + CoA. It catalyses the reaction 1-hexadecanoyl-sn-glycero-3-phosphate + (9Z)-octadecenoyl-CoA = 1-hexadecanoyl-2-(9Z-octadecenoyl)-sn-glycero-3-phosphate + CoA. The catalysed reaction is 1-tetradecanoyl-sn-glycerol 3-phosphate + (9Z)-octadecenoyl-CoA = 1-tetradecanoyl-2-(9Z)-octadecenoyl-sn-glycero-3-phosphate + CoA. It carries out the reaction 1-(9Z,12Z,15Z)-octadecatrienoyl-sn-glycero-3-phosphate + (9Z)-octadecenoyl-CoA = 1-(9Z,12Z,15Z)-octadecatrienoyl-2-(9Z)-octadecenoyl-sn-glycero-3-phosphate + CoA. The enzyme catalyses 1-(6Z,9Z,12Z-octadecatrienoyl)-sn-glycero-3-phosphate + (9Z)-octadecenoyl-CoA = (6Z,9Z,12Z)-octadecatrienoyl-2-(9Z)-octadecenoyl-sn-glycero-3-phosphate + CoA. It catalyses the reaction 1-eicosanoyl-sn-glycero-3-phosphate + (9Z)-octadecenoyl-CoA = 1-eicosanoyl-2-(9Z)-octadecenoyl-sn-glycero-3-phosphate + CoA. The catalysed reaction is 1-hexadecanoyl-sn-glycero-3-phosphate + octadecanoyl-CoA = 1-hexadecanoyl-2-octadecanoyl-sn-glycero-3-phosphate + CoA. It carries out the reaction 1-hexadecanoyl-sn-glycero-3-phosphate + (5Z,8Z,11Z,14Z)-eicosatetraenoyl-CoA = 1-hexadecanoyl-2-(5Z,8Z,11Z,14Z-eicosatetraenoyl)-sn-glycero-3-phosphate + CoA. The enzyme catalyses 1-hexadecanoyl-sn-glycero-3-phosphate + hexadecanoyl-CoA = 1,2-dihexadecanoyl-sn-glycero-3-phosphate + CoA. It catalyses the reaction 1-hexadecanoyl-sn-glycero-3-phosphate + tetradecanoyl-CoA = 1-hexadecanoyl-2-tetradecanoyl-sn-glycero-3-phosphate + CoA. The catalysed reaction is (11Z)-octadecenoyl-CoA + 1-(9Z-octadecenoyl)-sn-glycero-3-phosphate = 1-(9Z)-octadecenoyl-2-(11Z)-octadecenoyl-sn-glycero-3-phosphate + CoA. It participates in phospholipid metabolism; CDP-diacylglycerol biosynthesis; CDP-diacylglycerol from sn-glycerol 3-phosphate: step 2/3. Functionally, converts 1-acyl-sn-glycerol-3-phosphate (lysophosphatidic acid or LPA) into 1,2-diacyl-sn-glycerol-3-phosphate (phosphatidic acid or PA) by incorporating an acyl moiety at the sn-2 position of the glycerol backbone. This Mus musculus (Mouse) protein is 1-acyl-sn-glycerol-3-phosphate acyltransferase beta (Agpat2).